Consider the following 121-residue polypeptide: UPF0102 protein Xfasm12_1748 (121 aa).

It belongs to the UPF0102 family.

In Xylella fastidiosa (strain M12), this protein is UPF0102 protein Xfasm12_1748.